A 319-amino-acid polypeptide reads, in one-letter code: Acetyl-coenzyme A carboxylase carboxyl transferase subunit alpha (319 aa).

The 262-residue stretch at 35–296 (NLDEEVQRLR…KAQLLADLND (262 aa)) folds into the CoA carboxyltransferase C-terminal domain.

Belongs to the AccA family. In terms of assembly, acetyl-CoA carboxylase is a heterohexamer composed of biotin carboxyl carrier protein (AccB), biotin carboxylase (AccC) and two subunits each of ACCase subunit alpha (AccA) and ACCase subunit beta (AccD).

Its subcellular location is the cytoplasm. The catalysed reaction is N(6)-carboxybiotinyl-L-lysyl-[protein] + acetyl-CoA = N(6)-biotinyl-L-lysyl-[protein] + malonyl-CoA. It functions in the pathway lipid metabolism; malonyl-CoA biosynthesis; malonyl-CoA from acetyl-CoA: step 1/1. Functionally, component of the acetyl coenzyme A carboxylase (ACC) complex. First, biotin carboxylase catalyzes the carboxylation of biotin on its carrier protein (BCCP) and then the CO(2) group is transferred by the carboxyltransferase to acetyl-CoA to form malonyl-CoA. The polypeptide is Acetyl-coenzyme A carboxylase carboxyl transferase subunit alpha (Yersinia pseudotuberculosis serotype O:3 (strain YPIII)).